The chain runs to 241 residues: Superoxide dismutase [Mn] 2, mitochondrial (241 aa).

Residues His60, His108, Asp197, and His201 each contribute to the Mn(2+) site.

This sequence belongs to the iron/manganese superoxide dismutase family. As to quaternary structure, homotetramer. It depends on Mn(2+) as a cofactor.

It localises to the mitochondrion matrix. It carries out the reaction 2 superoxide + 2 H(+) = H2O2 + O2. In terms of biological role, destroys superoxide anion radicals which are normally produced within the cells and which are toxic to biological systems. The polypeptide is Superoxide dismutase [Mn] 2, mitochondrial (MSD2) (Arabidopsis thaliana (Mouse-ear cress)).